Reading from the N-terminus, the 135-residue chain is Actin-related protein 2/3 complex subunit 5B (135 aa).

This sequence belongs to the ARPC5 family. As to quaternary structure, component of the Arp2/3 complex composed of ARP2, ARP3, ARPC1/p41-ARC, ARPC2/p34-ARC, ARPC3/p21-ARC, ARPC4/p20-ARC and ARPC5/p16-ARC.

The protein resides in the cytoplasm. It is found in the cytoskeleton. Its subcellular location is the cell projection. In terms of biological role, functions as a component of the Arp2/3 complex which is involved in regulation of actin polymerization and together with an activating nucleation-promoting factor (NPF) mediates the formation of branched actin networks. Arp2/3 complex plays a critical role in the control of cell morphogenesis via the modulation of cell polarity development. The sequence is that of Actin-related protein 2/3 complex subunit 5B (ARPC5B) from Arabidopsis thaliana (Mouse-ear cress).